The primary structure comprises 279 residues: Homeobox protein BarH-like 2 (279 aa).

Disordered stretches follow at residues 110–137 and 194–279; these read APGG…RRSR and KGGQ…PPLS. Residues 118–128 show a composition bias toward polar residues; it reads SSESETEQPTP. Positions 133–192 form a DNA-binding region, homeobox; that stretch reads PRRSRTIFTELQLMGLEKKFQKQKYLSTPDRLDLAQSLGLTQLQVKTWYQNRRMKWKKMV. Polar residues predominate over residues 225-240; it reads NSQAQGQEQLEPSQGQ. Residues 261–279 show a composition bias toward pro residues; sequence PPDPPQELPIPSSEPPPLS.

This sequence belongs to the BAR homeobox family. Highly expressed in adult salivary gland and at much lower levels in mammary gland, kidney and placenta.

It localises to the nucleus. In terms of biological role, transcription factor. Binds optimally to the DNA consensus sequence 5'-YYTAATGRTTTTY-3'. May control the expression of neural adhesion molecules such as L1 or Ng-CAM during embryonic development of both the central and peripherical nervous system. May be involved in controlling adhesive processes in keratinizing epithelia. In Homo sapiens (Human), this protein is Homeobox protein BarH-like 2 (BARX2).